Here is a 483-residue protein sequence, read N- to C-terminus: Cobyric acid synthase (483 aa).

Residues 248 to 435 (VLKVVVPVLP…LHGLFETAAA (188 aa)) form the GATase cobBQ-type domain. Catalysis depends on C329, which acts as the Nucleophile. The active site involves H427.

It belongs to the CobB/CobQ family. CobQ subfamily.

Its pathway is cofactor biosynthesis; adenosylcobalamin biosynthesis. Functionally, catalyzes amidations at positions B, D, E, and G on adenosylcobyrinic A,C-diamide. NH(2) groups are provided by glutamine, and one molecule of ATP is hydrogenolyzed for each amidation. This is Cobyric acid synthase from Pseudomonas fluorescens (strain SBW25).